Here is a 435-residue protein sequence, read N- to C-terminus: Phosphomethylpyrimidine synthase (435 aa).

Substrate is bound by residues Asn67, Met96, Tyr125, His163, Ser185–Gly187, Asp226–Arg229, and Glu265. Zn(2+) is bound at residue His269. Substrate is bound at residue Tyr292. His333 contacts Zn(2+). The [4Fe-4S] cluster site is built by Cys408, Cys411, and Cys415.

The protein belongs to the ThiC family. The cofactor is [4Fe-4S] cluster.

The catalysed reaction is 5-amino-1-(5-phospho-beta-D-ribosyl)imidazole + S-adenosyl-L-methionine = 4-amino-2-methyl-5-(phosphooxymethyl)pyrimidine + CO + 5'-deoxyadenosine + formate + L-methionine + 3 H(+). Its pathway is cofactor biosynthesis; thiamine diphosphate biosynthesis. Its function is as follows. Catalyzes the synthesis of the hydroxymethylpyrimidine phosphate (HMP-P) moiety of thiamine from aminoimidazole ribotide (AIR) in a radical S-adenosyl-L-methionine (SAM)-dependent reaction. The sequence is that of Phosphomethylpyrimidine synthase from Thermus thermophilus (strain ATCC 27634 / DSM 579 / HB8).